Here is a 243-residue protein sequence, read N- to C-terminus: 1-(5-phosphoribosyl)-5-[(5-phosphoribosylamino)methylideneamino] imidazole-4-carboxamide isomerase (243 aa).

Asp-8 serves as the catalytic Proton acceptor. Asp-130 serves as the catalytic Proton donor.

It belongs to the HisA/HisF family.

It localises to the cytoplasm. It catalyses the reaction 1-(5-phospho-beta-D-ribosyl)-5-[(5-phospho-beta-D-ribosylamino)methylideneamino]imidazole-4-carboxamide = 5-[(5-phospho-1-deoxy-D-ribulos-1-ylimino)methylamino]-1-(5-phospho-beta-D-ribosyl)imidazole-4-carboxamide. It functions in the pathway amino-acid biosynthesis; L-histidine biosynthesis; L-histidine from 5-phospho-alpha-D-ribose 1-diphosphate: step 4/9. The protein is 1-(5-phosphoribosyl)-5-[(5-phosphoribosylamino)methylideneamino] imidazole-4-carboxamide isomerase of Acinetobacter baumannii (strain SDF).